The sequence spans 521 residues: GMP synthase [glutamine-hydrolyzing] (521 aa).

The Glutamine amidotransferase type-1 domain maps to 5-197; it reads KILILDFGSQ…VLDICGAQPG (193 aa). Cys-81 (nucleophile) is an active-site residue. Active-site residues include His-171 and Glu-173. Residues 198–390 enclose the GMPS ATP-PPase domain; sequence WTMPNYIEEA…LGLPREMVYR (193 aa). ATP is bound at residue 225-231; sequence SGGVDSS.

In terms of assembly, homodimer.

It carries out the reaction XMP + L-glutamine + ATP + H2O = GMP + L-glutamate + AMP + diphosphate + 2 H(+). The protein operates within purine metabolism; GMP biosynthesis; GMP from XMP (L-Gln route): step 1/1. Catalyzes the synthesis of GMP from XMP. The sequence is that of GMP synthase [glutamine-hydrolyzing] (guaA) from Neisseria meningitidis serogroup A / serotype 4A (strain DSM 15465 / Z2491).